Consider the following 85-residue polypeptide: Small ribosomal subunit protein bS16c (85 aa).

It belongs to the bacterial ribosomal protein bS16 family.

It is found in the plastid. Its subcellular location is the chloroplast. This Oryza nivara (Indian wild rice) protein is Small ribosomal subunit protein bS16c.